Reading from the N-terminus, the 480-residue chain is ATP synthase subunit beta (480 aa).

Residue 153 to 160 (GGAGVGKT) participates in ATP binding.

It belongs to the ATPase alpha/beta chains family. In terms of assembly, F-type ATPases have 2 components, CF(1) - the catalytic core - and CF(0) - the membrane proton channel. CF(1) has five subunits: alpha(3), beta(3), gamma(1), delta(1), epsilon(1). CF(0) has three main subunits: a(1), b(2) and c(9-12). The alpha and beta chains form an alternating ring which encloses part of the gamma chain. CF(1) is attached to CF(0) by a central stalk formed by the gamma and epsilon chains, while a peripheral stalk is formed by the delta and b chains.

The protein resides in the cell membrane. It catalyses the reaction ATP + H2O + 4 H(+)(in) = ADP + phosphate + 5 H(+)(out). Its function is as follows. Produces ATP from ADP in the presence of a proton gradient across the membrane. The catalytic sites are hosted primarily by the beta subunits. This is ATP synthase subunit beta from Lactobacillus gasseri (strain ATCC 33323 / DSM 20243 / BCRC 14619 / CIP 102991 / JCM 1131 / KCTC 3163 / NCIMB 11718 / NCTC 13722 / AM63).